The chain runs to 113 residues: Hydrogenase maturation factor HypA (113 aa).

Residue His2 participates in Ni(2+) binding. Residues Cys73, Cys76, Cys89, and Cys92 each coordinate Zn(2+).

Belongs to the HypA/HybF family.

In terms of biological role, involved in the maturation of [NiFe] hydrogenases. Required for nickel insertion into the metal center of the hydrogenase. The sequence is that of Hydrogenase maturation factor HypA from Azotobacter chroococcum mcd 1.